Consider the following 267-residue polypeptide: Alkaline ceramidase 3 (267 aa).

At 1 to 33 the chain is on the cytoplasmic side; that stretch reads MAPAADREGYWGPTTSTLDWCEENYSVTWYIAE. Residues aspartate 19, tryptophan 20, glutamate 22, asparagine 24, and glutamate 33 each coordinate Ca(2+). A helical membrane pass occupies residues 34 to 55; that stretch reads FWNTVSNLIMIIPPMFGAVQSV. Residues 56-61 are Lumenal-facing; it reads RDGLEK. The chain crosses the membrane as a helical span at residues 62-82; that stretch reads RYIASYLALTVVGMGSWCFHM. Zn(2+) is bound at residue histidine 81. Residues 83 to 87 lie on the Cytoplasmic side of the membrane; the sequence is TLKYE. The helical transmembrane segment at 88–108 threads the bilayer; sequence MQLLDELPMIYSCCIFVYCMF. Residues 109–118 lie on the Lumenal side of the membrane; the sequence is ECFKIKNSVN. Residues 119-139 form a helical membrane-spanning segment; the sequence is YHLLFTLVLFSLIVTTVYLKV. Residues 140–141 are Cytoplasmic-facing; it reads KE. The helical transmembrane segment at 142 to 162 threads the bilayer; that stretch reads PIFHQVMYGMLVFTLVLRSIY. The Lumenal portion of the chain corresponds to 163–173; it reads IVTWVYPWLRG. The chain crosses the membrane as a helical span at residues 174-194; that stretch reads LGYTSLGIFLLGFLFWNIDNI. Topologically, residues 195–215 are cytoplasmic; sequence FCESLRNFRKKVPPIIGITTQ. A helical membrane pass occupies residues 216-236; sequence FHAWWHILTGLGSYLHILFSL. Zn(2+)-binding residues include histidine 217 and histidine 221. At 237 to 267 the chain is on the lumenal side; sequence YTRTLYLRYRPKVKFLFGIWPVILFEPLRKH.

Belongs to the alkaline ceramidase family. Requires Zn(2+) as cofactor. As to expression, ubiquitously expressed. Highly expressed in placenta. Expressed in erythrocytes.

Its subcellular location is the endoplasmic reticulum membrane. The protein resides in the golgi apparatus membrane. The catalysed reaction is an N-acyl-(4R)-4-hydroxysphinganine + H2O = (4R)-hydroxysphinganine + a fatty acid. The enzyme catalyses N-(5Z,8Z,11Z,14Z-eicosatetraenoyl)-sphing-4-enine + H2O = sphing-4-enine + (5Z,8Z,11Z,14Z)-eicosatetraenoate. It carries out the reaction N-(5Z,8Z,11Z,14Z-eicosatetraenoyl)-sphinganine + H2O = sphinganine + (5Z,8Z,11Z,14Z)-eicosatetraenoate. It catalyses the reaction N-(5Z,8Z,11Z,14Z-eicosatetraenoyl)-(4R)-hydroxysphinganine + H2O = (4R)-hydroxysphinganine + (5Z,8Z,11Z,14Z)-eicosatetraenoate. The catalysed reaction is N-(11Z-eicosenoyl)-sphing-4-enine + H2O = (11Z)-eicosenoate + sphing-4-enine. The enzyme catalyses N-(11Z-eicosenoyl)-sphinganine + H2O = (11Z)-eicosenoate + sphinganine. It carries out the reaction N-(11Z-eicosenoyl)-(4R)-hydroxysphinganine + H2O = (11Z)-eicosenoate + (4R)-hydroxysphinganine. It catalyses the reaction N-(9Z-octadecenoyl)-sphing-4-enine + H2O = sphing-4-enine + (9Z)-octadecenoate. The catalysed reaction is N-(9Z-octadecenoyl)-sphinganine + H2O = sphinganine + (9Z)-octadecenoate. The enzyme catalyses N-(9Z-octadecenoyl)-(4R)-hydroxysphinganine + H2O = (4R)-hydroxysphinganine + (9Z)-octadecenoate. It carries out the reaction an N-acylsphing-4-enine + H2O = sphing-4-enine + a fatty acid. It catalyses the reaction an N-acylsphinganine + H2O = sphinganine + a fatty acid. The protein operates within lipid metabolism; sphingolipid metabolism. Activated by 5 mM Ca(2+) and inhibited by 5 mM Zn(2+). In terms of biological role, endoplasmic reticulum and Golgi ceramidase that catalyzes the hydrolysis of unsaturated long-chain C18:1-, C20:1- and C20:4-ceramides, dihydroceramides and phytoceramides into sphingoid bases like sphingosine and free fatty acids at alkaline pH. Ceramides, sphingosine, and its phosphorylated form sphingosine-1-phosphate are bioactive lipids that mediate cellular signaling pathways regulating several biological processes including cell proliferation, apoptosis and differentiation. Controls the generation of sphingosine in erythrocytes, and thereby sphingosine-1-phosphate in plasma. Through the regulation of ceramides and sphingosine-1-phosphate homeostasis in the brain may play a role in neurons survival and function. By regulating the levels of pro-inflammatory ceramides in immune cells and tissues, may modulate the inflammatory response. The protein is Alkaline ceramidase 3 (ACER3) of Homo sapiens (Human).